A 660-amino-acid polypeptide reads, in one-letter code: Phosphatidylinositol-binding clathrin assembly protein (660 aa).

S2 bears the N-acetylserine mark. The ENTH domain maps to 14–145; sequence QHSVTGSAVS…VSYRQVAFDF (132 aa). S16 and S20 each carry phosphoserine. Residues 221 to 294 form an interaction with PIMREG region; the sequence is KYFDMKKNQC…LEGKKIKDST (74 aa). K238 participates in a covalent cross-link: Glycyl lysine isopeptide (Lys-Gly) (interchain with G-Cter in SUMO2). A phosphoserine mark is found at S303 and S315. A compositionally biased stretch (polar residues) spans 556-566; it reads GTTKNDVSWSQ. Residues 556 to 580 form a disordered region; the sequence is GTTKNDVSWSQPGEKKLTGGSNWQP.

This sequence belongs to the PICALM/SNAP91 family. Binds to clathrin; involves primarily the C-terminal sequences, but the full-length protein is required for full binding capacity. Binds phosphatidylinositol 4,5- bisphosphate. Interacts with PIMREG; this interaction may change the subcellular location into the nucleus. Interacts with AP2A1 (via its alpha-appendage domain). Interacts (via N-terminus) with VAMP2; VAMP3; VAMP7 and VAMP8 (Via N-terminus). Interacts with LC3/MAP1LC3A. In terms of tissue distribution, skins and livers of 1-week-old mice.

It is found in the cell membrane. The protein localises to the membrane. The protein resides in the clathrin-coated pit. It localises to the golgi apparatus. Its subcellular location is the cytoplasmic vesicle. It is found in the clathrin-coated vesicle. The protein localises to the nucleus. In terms of biological role, cytoplasmic adapter protein that plays a critical role in clathrin-mediated endocytosis which is important in processes such as internalization of cell receptors, synaptic transmission or removal of apoptotic cells. Recruits AP-2 and attaches clathrin triskelions to the cytoplasmic side of plasma membrane leading to clathrin-coated vesicles (CCVs) assembly. Furthermore, regulates clathrin-coated vesicle size and maturation by directly sensing and driving membrane curvature. In addition to binding to clathrin, mediates the endocytosis of small R-SNARES (Soluble NSF Attachment Protein REceptors) between plasma membranes and endosomes including VAMP2, VAMP3, VAMP4, VAMP7 or VAMP8. In turn, PICALM-dependent SNARE endocytosis is required for the formation and maturation of autophagic precursors. Modulates thereby autophagy and the turnover of autophagy substrates such as MAPT/TAU or amyloid precursor protein cleaved C-terminal fragment (APP-CTF). This Mus musculus (Mouse) protein is Phosphatidylinositol-binding clathrin assembly protein (Picalm).